The primary structure comprises 427 residues: Kallistatin (427 aa).

Residues 1–20 form the signal peptide; that stretch reads MHLIDYLLLLLVGLLALSHG. N-linked (GlcNAc...) asparagine glycans are attached at residues Asn-33, Asn-108, Asn-157, and Asn-238.

Belongs to the serpin family. In terms of assembly, monomer and some homodimers.

It localises to the secreted. Inhibits human amidolytic and kininogenase activities of tissue kallikrein. The protein is Kallistatin (SERPINA4) of Pongo abelii (Sumatran orangutan).